A 248-amino-acid chain; its full sequence is Spherulin-1B (248 aa).

An N-terminal signal peptide occupies residues 1–20; the sequence is MQVRNILVALVVVCFAVSEA. The Cupin type-1 domain occupies 61–207; it reads FDFKNSKLGV…SLNISSIQTV (147 aa). Mn(2+) is bound by residues histidine 110, histidine 112, glutamate 117, and histidine 157. Asparagine 200 carries an N-linked (GlcNAc...) asparagine glycan.

The protein belongs to the germin family.

The protein resides in the secreted. It localises to the cell wall. This chain is Spherulin-1B, found in Physarum polycephalum (Slime mold).